Here is a 232-residue protein sequence, read N- to C-terminus: MIPTSFPPREEIARLTARMLLEIEAVHFRPQEPFTLASGLPSPTYIDCRKLISYPRIRSTLMDFMAVTLLRDAGFEAFDNIAGGETAGIPFAALVAERLGLPMTYVRKKPKGYGRNARIEGVMTEGQRVLLVEDLTTDGGSKLSFVDAIRETGASCAHTAVIFYYGIFPETIGRLQAHGVTLHHLCTWWDVLAEARASGTFDAGTLAEVESFLSNPRDWQDARKPADPTKSL.

Residues Arg107, Lys108, Lys111, and 133–141 (EDLTTDGGS) contribute to the 5-phospho-alpha-D-ribose 1-diphosphate site. Residue Thr137 coordinates orotate.

The protein belongs to the purine/pyrimidine phosphoribosyltransferase family. PyrE subfamily. As to quaternary structure, homodimer. Mg(2+) serves as cofactor.

The catalysed reaction is orotidine 5'-phosphate + diphosphate = orotate + 5-phospho-alpha-D-ribose 1-diphosphate. Its pathway is pyrimidine metabolism; UMP biosynthesis via de novo pathway; UMP from orotate: step 1/2. Its function is as follows. Catalyzes the transfer of a ribosyl phosphate group from 5-phosphoribose 1-diphosphate to orotate, leading to the formation of orotidine monophosphate (OMP). The polypeptide is Orotate phosphoribosyltransferase (Cereibacter sphaeroides (strain ATCC 17023 / DSM 158 / JCM 6121 / CCUG 31486 / LMG 2827 / NBRC 12203 / NCIMB 8253 / ATH 2.4.1.) (Rhodobacter sphaeroides)).